We begin with the raw amino-acid sequence, 215 residues long: MKINTVLFDLDGTLINTNELIISSFLHTLNHYYSNQYKREDVLPFIGPSLHDTFSKIDASKVEEMITCYRQFNHEHHDELVEEYETVYETVQELKKQGYKIGIVTTKARQTVEMGLKLSKLDQFFDVVVTIDDVEHVKPHPEPLQKALELLDAKPEETLMVGDNHHDIVGGQNAGTKTVAVSWTLKGRAYLEAYKPDYVLDKMSDLLPILSRING.

The active-site Nucleophile is the D9.

This sequence belongs to the HAD-like hydrolase superfamily. PpaX family. Requires Mg(2+) as cofactor.

It catalyses the reaction diphosphate + H2O = 2 phosphate + H(+). Its function is as follows. Hydrolyzes pyrophosphate formed during P-Ser-HPr dephosphorylation by HPrK/P. Might play a role in controlling the intracellular pyrophosphate pool. In Bacillus mycoides (strain KBAB4) (Bacillus weihenstephanensis), this protein is Pyrophosphatase PpaX.